Consider the following 341-residue polypeptide: Retinol dehydrogenase 10 (341 aa).

Residues 3–23 (IVVEFFLVTFKVLWAFVLAAA) traverse the membrane as a helical; Signal-anchor segment. 40–64 (LITGAGSGLGRLFALEFARRRALLV) contributes to the NADP(+) binding site. Substrate is bound at residue S197. Y210 serves as the catalytic Proton acceptor.

Belongs to the short-chain dehydrogenases/reductases (SDR) family. In terms of tissue distribution, detected in retina, entire eyecups and in liver (at protein level).

Its subcellular location is the microsome membrane. It is found in the endoplasmic reticulum membrane. The catalysed reaction is all-trans-retinol + NADP(+) = all-trans-retinal + NADPH + H(+). It functions in the pathway cofactor metabolism; retinol metabolism. Its function is as follows. Retinol dehydrogenase with a clear preference for NADP. Converts all-trans-retinol to all-trans-retinal. The sequence is that of Retinol dehydrogenase 10 (Rdh10) from Rattus norvegicus (Rat).